A 711-amino-acid chain; its full sequence is MLNPIVRKFQYGQHTVTLETGMMARQATAAVMVSMDDTAVFVTVVGQKKAKPGQDFFPLTVNYQERTYAAGRIPGSFFRREGRPSEGETLIARLIDRPIRPLFPEGFVNEVQVIATVVSVNPQVNPDIVAMIGASAALSLSGIPFNGPIGAARVGYINDQYVLNPTQDELKESKLDLVVAGTEAAVLMVESEAELLSEDQMLGAVVFGHEQQQVVIQNINELVKEAGKPRWDWQPEPVNEALNARVAALAEARLSDAYRITDKQERYAQVDVIKSETIATLLAEDETLDENELGEILHAIEKNVVRSRVLAGEPRIDGREKDMIRGLDVRTGVLPRTHGSALFTRGETQALVTATLGTARDAQVLDELMGERTDTFLFHYNFPPYSVGETGIVGSPKRREIGHGRLAKRGVLAVMPDMDKFPYTVRVVSEITESNGSSSMASVCGASLALMDAGVPIKAAVAGIAMGLVKEGDNYVVLSDILGDEDHLGDMDFKVAGSRDGISALQMDIKIEGITKEIMQVALNQAKGARLHILGVMEQAINAPRGDISEFAPRIHTIKINPDKIKDVIGKGGSVIRALTEETGTTIEIEDDGTVKIAATDGEKAKHAIRRIEEITAEIEVGRVYTGKVTRIVDFGAFVAIGGGKEGLVHISQIADKRVEKVTDYLLMGQEVPVKVLEVDRQGRIRLSIKEATEQSQPAAAPEAPAAEQGE.

The Mg(2+) site is built by Asp486 and Asp492. One can recognise a KH domain in the interval 553–612 (PRIHTIKINPDKIKDVIGKGGSVIRALTEETGTTIEIEDDGTVKIAATDGEKAKHAIRRI). The S1 motif domain occupies 622–690 (GRVYTGKVTR…RQGRIRLSIK (69 aa)). The disordered stretch occupies residues 690 to 711 (KEATEQSQPAAAPEAPAAEQGE). A compositionally biased stretch (low complexity) spans 694 to 711 (EQSQPAAAPEAPAAEQGE).

The protein belongs to the polyribonucleotide nucleotidyltransferase family. As to quaternary structure, component of the RNA degradosome, which is a multiprotein complex involved in RNA processing and mRNA degradation. Mg(2+) is required as a cofactor.

It is found in the cytoplasm. It catalyses the reaction RNA(n+1) + phosphate = RNA(n) + a ribonucleoside 5'-diphosphate. Involved in mRNA degradation. Catalyzes the phosphorolysis of single-stranded polyribonucleotides processively in the 3'- to 5'-direction. The polypeptide is Polyribonucleotide nucleotidyltransferase (Shigella dysenteriae serotype 1 (strain Sd197)).